Here is a 104-residue protein sequence, read N- to C-terminus: NADH-quinone oxidoreductase subunit K (104 aa).

Transmembrane regions (helical) follow at residues 4–24 (VPAS…LFGA), 31–51 (VIVL…LVAF), and 67–87 (LFTM…LIAL).

The protein belongs to the complex I subunit 4L family. As to quaternary structure, NDH-1 is composed of 14 different subunits. Subunits NuoA, H, J, K, L, M, N constitute the membrane sector of the complex.

Its subcellular location is the cell membrane. It carries out the reaction a quinone + NADH + 5 H(+)(in) = a quinol + NAD(+) + 4 H(+)(out). Its function is as follows. NDH-1 shuttles electrons from NADH, via FMN and iron-sulfur (Fe-S) centers, to quinones in the respiratory chain. The immediate electron acceptor for the enzyme in this species is believed to be a menaquinone. Couples the redox reaction to proton translocation (for every two electrons transferred, four hydrogen ions are translocated across the cytoplasmic membrane), and thus conserves the redox energy in a proton gradient. The sequence is that of NADH-quinone oxidoreductase subunit K from Bacillus cereus (strain G9842).